Reading from the N-terminus, the 70-residue chain is Large ribosomal subunit protein bL31 (70 aa).

Zn(2+)-binding residues include cysteine 16, cysteine 18, cysteine 37, and cysteine 40.

It belongs to the bacterial ribosomal protein bL31 family. Type A subfamily. In terms of assembly, part of the 50S ribosomal subunit. Zn(2+) is required as a cofactor.

Its function is as follows. Binds the 23S rRNA. This Pasteurella multocida (strain Pm70) protein is Large ribosomal subunit protein bL31.